A 62-amino-acid polypeptide reads, in one-letter code: Photosystem II reaction center protein Z (62 aa).

2 consecutive transmembrane segments (helical) span residues 8–28 (LVSILILLSFALVVGVPVILV) and 41–61 (YASAGLWFGLVIVTAAFNSFV).

The protein belongs to the PsbZ family. In terms of assembly, PSII is composed of 1 copy each of membrane proteins PsbA, PsbB, PsbC, PsbD, PsbE, PsbF, PsbH, PsbI, PsbJ, PsbK, PsbL, PsbM, PsbT, PsbX, PsbY, PsbZ, Psb30/Ycf12, at least 3 peripheral proteins of the oxygen-evolving complex and a large number of cofactors. It forms dimeric complexes.

It localises to the plastid. The protein localises to the chloroplast thylakoid membrane. May control the interaction of photosystem II (PSII) cores with the light-harvesting antenna, regulates electron flow through the 2 photosystem reaction centers. PSII is a light-driven water plastoquinone oxidoreductase, using light energy to abstract electrons from H(2)O, generating a proton gradient subsequently used for ATP formation. This chain is Photosystem II reaction center protein Z, found in Guillardia theta (Cryptophyte).